The sequence spans 142 residues: MKTIGLDVGTKTIGVAISDAFGWTAQGLPTIQRSEDDPNRDFEALAQLIKENDVQKVVIGYPKNMNGTVGESATRSETFARTLEQQCNVQTVLWDERLTTAAAQRVLIDADVSRKKRKKAVDKMAAVFILQGYLDRQSHTLT.

The protein belongs to the YqgF nuclease family.

The protein localises to the cytoplasm. Functionally, could be a nuclease involved in processing of the 5'-end of pre-16S rRNA. This chain is Putative pre-16S rRNA nuclease, found in Shouchella clausii (strain KSM-K16) (Alkalihalobacillus clausii).